We begin with the raw amino-acid sequence, 1279 residues long: Talin-A (1279 aa).

Residues 84–365 (RPQKFKLLDG…GYIEIIMKAR (282 aa)) enclose the FERM domain.

It is found in the cytoplasm. The protein resides in the cytoskeleton. Its subcellular location is the cell cortex. Actin-binding protein that may be involved in the control of cell motility and chemotaxis. The chain is Talin-A (talA) from Dictyostelium discoideum (Social amoeba).